A 57-amino-acid polypeptide reads, in one-letter code: Large ribosomal subunit protein bL32 (57 aa).

The protein belongs to the bacterial ribosomal protein bL32 family.

The sequence is that of Large ribosomal subunit protein bL32 from Mycolicibacterium gilvum (strain PYR-GCK) (Mycobacterium gilvum (strain PYR-GCK)).